Reading from the N-terminus, the 153-residue chain is 6,7-dimethyl-8-ribityllumazine synthase 1 (153 aa).

Residues F16, 47-49, and 76-78 contribute to the 5-amino-6-(D-ribitylamino)uracil site; these read ALE and MVI. 81–82 is a binding site for (2S)-2-hydroxy-3-oxobutyl phosphate; it reads ET. H84 acts as the Proton donor in catalysis. Residue N109 participates in 5-amino-6-(D-ribitylamino)uracil binding. R123 contributes to the (2S)-2-hydroxy-3-oxobutyl phosphate binding site.

It belongs to the DMRL synthase family.

It catalyses the reaction (2S)-2-hydroxy-3-oxobutyl phosphate + 5-amino-6-(D-ribitylamino)uracil = 6,7-dimethyl-8-(1-D-ribityl)lumazine + phosphate + 2 H2O + H(+). Its pathway is cofactor biosynthesis; riboflavin biosynthesis; riboflavin from 2-hydroxy-3-oxobutyl phosphate and 5-amino-6-(D-ribitylamino)uracil: step 1/2. Catalyzes the formation of 6,7-dimethyl-8-ribityllumazine by condensation of 5-amino-6-(D-ribitylamino)uracil with 3,4-dihydroxy-2-butanone 4-phosphate. This is the penultimate step in the biosynthesis of riboflavin. This is 6,7-dimethyl-8-ribityllumazine synthase 1 from Rhizobium meliloti (strain 1021) (Ensifer meliloti).